Consider the following 406-residue polypeptide: Phosphopentomutase (406 aa).

The Mn(2+) site is built by Asp10, Asp305, His310, Asp346, His347, and His358.

It belongs to the phosphopentomutase family. Mn(2+) is required as a cofactor.

The protein resides in the cytoplasm. The enzyme catalyses 2-deoxy-alpha-D-ribose 1-phosphate = 2-deoxy-D-ribose 5-phosphate. It catalyses the reaction alpha-D-ribose 1-phosphate = D-ribose 5-phosphate. It functions in the pathway carbohydrate degradation; 2-deoxy-D-ribose 1-phosphate degradation; D-glyceraldehyde 3-phosphate and acetaldehyde from 2-deoxy-alpha-D-ribose 1-phosphate: step 1/2. Its function is as follows. Isomerase that catalyzes the conversion of deoxy-ribose 1-phosphate (dRib-1-P) and ribose 1-phosphate (Rib-1-P) to deoxy-ribose 5-phosphate (dRib-5-P) and ribose 5-phosphate (Rib-5-P), respectively. In Vibrio cholerae serotype O1 (strain ATCC 39541 / Classical Ogawa 395 / O395), this protein is Phosphopentomutase.